Reading from the N-terminus, the 328-residue chain is UPF0252 protein PF0978 (328 aa).

The chain crosses the membrane as a helical span at residues 3–23 (VPLLILLFLVLTSGCIAPSTP).

This sequence belongs to the UPF0252 family.

It localises to the membrane. The polypeptide is UPF0252 protein PF0978 (Pyrococcus furiosus (strain ATCC 43587 / DSM 3638 / JCM 8422 / Vc1)).